The sequence spans 290 residues: Elongation factor Ts (290 aa).

The segment at 81 to 84 (TDFV) is involved in Mg(2+) ion dislocation from EF-Tu.

The protein belongs to the EF-Ts family.

The protein resides in the cytoplasm. Its function is as follows. Associates with the EF-Tu.GDP complex and induces the exchange of GDP to GTP. It remains bound to the aminoacyl-tRNA.EF-Tu.GTP complex up to the GTP hydrolysis stage on the ribosome. The polypeptide is Elongation factor Ts (Vesicomyosocius okutanii subsp. Calyptogena okutanii (strain HA)).